Reading from the N-terminus, the 572-residue chain is Chromatin assembly factor 1 subunit B (572 aa).

7 WD repeats span residues 11–54 (HNKE…DGKA), 64–103 (RHTK…EPEQ), 127–166 (GHLE…KISI), 169–208 (EHKS…VAFN), 228–279 (FHDD…RPIA), 301–347 (RPVA…PFGY), and 351–392 (IHYH…IPLK). T401 bears the Phosphothreonine mark. Positions 403-572 (DTAKKAKNQT…LAPDDSSKTV (170 aa)) are disordered. Polar residues predominate over residues 411–430 (QTHQGSSPGSRSVEGTPSNR). Position 416 is a phosphoserine (S416). A Phosphothreonine modification is found at T426. Residues 431–452 (TQDPSSPCTTPSPTTQSPAPSA) are compositionally biased toward low complexity. A Phosphoserine modification is found at S436. T440 is subject to Phosphothreonine. S456 and S465 each carry phosphoserine. Position 501 is an N6-acetyllysine (K501). Residues T502 and T510 each carry the phosphothreonine modification. Polar residues predominate over residues 511–529 (PLKTDTVPNPQPNSGTAPS). Positions 546-559 (PELKRPRLEEREGD) are enriched in basic and acidic residues.

It belongs to the WD repeat HIR1 family. Subunit of the CAF-1 complex that contains RBBP4, CHAF1B and CHAF1A. CHAF1A binds directly to CHAF1B. Interacts with histones H3.1, H3.2 and H3.1t.

The protein resides in the nucleus. It is found in the cytoplasm. Acts as a component of the histone chaperone complex chromatin assembly factor 1 (CAF-1), which assembles histone octamers onto DNA during replication and repair. CAF-1 performs the first step of the nucleosome assembly process, bringing newly synthesized histones H3 and H4 to replicating DNA; histones H2A/H2B can bind to this chromatin precursor subsequent to DNA replication to complete the histone octamer. This Mus musculus (Mouse) protein is Chromatin assembly factor 1 subunit B.